Consider the following 240-residue polypeptide: Putative tyrosine phosphatase 067L (240 aa).

One can recognise a Tyrosine-protein phosphatase domain in the interval 3 to 151 (QASFFVADKA…EREWPLNPTQ (149 aa)). Cys96 (phosphocysteine intermediate) is an active-site residue.

Belongs to the protein-tyrosine phosphatase family.

It catalyses the reaction O-phospho-L-tyrosyl-[protein] + H2O = L-tyrosyl-[protein] + phosphate. The chain is Putative tyrosine phosphatase 067L from Aedes vexans (Inland floodwater mosquito).